The primary structure comprises 419 residues: Effector protein BipC (419 aa).

2 disordered regions span residues 62-91 (VAGS…TVSG) and 338-402 (LQSG…AKSQ). Composition is skewed to basic and acidic residues over residues 71-91 (ELAR…TVSG) and 380-392 (TRDE…REAA).

This sequence belongs to the SctB/SipC family.

The protein localises to the secreted. The protein is Effector protein BipC (bipC) of Burkholderia pseudomallei (strain 1106a).